The chain runs to 407 residues: Imidazolonepropionase (407 aa).

Residues His-68 and His-70 each contribute to the Fe(3+) site. Zn(2+) contacts are provided by His-68 and His-70. 4-imidazolone-5-propanoate is bound by residues Arg-77, Tyr-140, and His-173. Tyr-140 is an N-formimidoyl-L-glutamate binding site. His-236 serves as a coordination point for Fe(3+). Residue His-236 coordinates Zn(2+). Gln-239 contributes to the 4-imidazolone-5-propanoate binding site. Residue Asp-311 coordinates Fe(3+). Asp-311 lines the Zn(2+) pocket. N-formimidoyl-L-glutamate-binding residues include Asn-313 and Gly-315. Residue Thr-316 coordinates 4-imidazolone-5-propanoate.

The protein belongs to the metallo-dependent hydrolases superfamily. HutI family. Zn(2+) serves as cofactor. Requires Fe(3+) as cofactor.

The protein resides in the cytoplasm. The enzyme catalyses 4-imidazolone-5-propanoate + H2O = N-formimidoyl-L-glutamate. It functions in the pathway amino-acid degradation; L-histidine degradation into L-glutamate; N-formimidoyl-L-glutamate from L-histidine: step 3/3. Its function is as follows. Catalyzes the hydrolytic cleavage of the carbon-nitrogen bond in imidazolone-5-propanoate to yield N-formimidoyl-L-glutamate. It is the third step in the universal histidine degradation pathway. The polypeptide is Imidazolonepropionase (Stenotrophomonas maltophilia (strain R551-3)).